A 374-amino-acid polypeptide reads, in one-letter code: Beta-1,3-N-acetylglucosaminyltransferase lunatic fringe (374 aa).

At 1 to 8 the chain is on the cytoplasmic side; it reads MLKTYRGK. The helical; Signal-anchor for type II membrane protein transmembrane segment at 9–29 threads the bilayer; it reads VVVSLAGATVTCLGFLLFLSQ. The Lumenal segment spans residues 30 to 374; it reads HQRIQADGMQ…TPWCPPQVAY (345 aa). Residue Asn-40 is glycosylated (N-linked (GlcNAc...) asparagine). The segment at 80 to 100 is disordered; the sequence is RSRREADKPSEAPGAATDAPP. A substrate-binding site is contributed by Arg-123. Asn-162 is a glycosylation site (N-linked (GlcNAc...) asparagine). Intrachain disulfides connect Cys-163-Cys-174 and Cys-192-Cys-255. Asp-196 serves as a coordination point for substrate. Asp-197 lines the Mn(2+) pocket. Asp-285 is a catalytic residue. Residue His-309 coordinates Mn(2+). Cys-359 and Cys-368 are oxidised to a cystine.

This sequence belongs to the glycosyltransferase 31 family. Mn(2+) is required as a cofactor. Requires Co(2+) as cofactor. Post-translationally, a soluble form may be derived from the membrane form by proteolytic processing. As to expression, in the embryo, expressed along the A-P axis of the neural tube, within the lateral plate mesoderm, in the presomitic mesoderm and the somites, in specific rhombomeres of the hindbrain (even-numbered rhombomeres) and in the otic vesicles.

It localises to the golgi apparatus membrane. The enzyme catalyses 3-O-(alpha-L-fucosyl)-L-threonyl-[EGF-like domain protein] + UDP-N-acetyl-alpha-D-glucosamine = 3-O-(N-acetyl-beta-D-glucosaminyl-(1-&gt;3)-alpha-L-fucosyl)-L-threonyl-[EGF-like domain protein] + UDP + H(+). The catalysed reaction is 3-O-(alpha-L-fucosyl)-L-seryl-[EGF-like domain protein] + UDP-N-acetyl-alpha-D-glucosamine = 3-O-(N-acetyl-beta-D-glucosaminyl-(1-&gt;3)-alpha-L-fucosyl)-L-seryl-[EGF-like domain protein] + UDP + H(+). Its function is as follows. Glycosyltransferase that initiates the elongation of O-linked fucose residues attached to EGF-like repeats in the extracellular domain of Notch molecules. Involved in the correct formation of boundaries in the somites and hindbrain. Required for Delta-Notch-mediated induction of hypochord cells at the lateral borders of the midline precursor domain. The chain is Beta-1,3-N-acetylglucosaminyltransferase lunatic fringe (lfng) from Danio rerio (Zebrafish).